Reading from the N-terminus, the 213-residue chain is MITNSLQKTKVKICGIKDLEIAKICKEEGADYIGFNFVSSSPRKIELSNAQKIVEYYKSEKNSPEIVLLFYQNSFEEIESITSVLDHDLVQWVWDDPLINRKKLLYKRQICSYRVQTQIHDQDLKDIEAEFLILDSYSKGVGGGTGETFNWELISKVKRKFLLAGGLDPSNVVNAIEIVKPFGVDVASGVESSPGIKDPQKVIQFIRNVKSTS.

Belongs to the TrpF family.

The catalysed reaction is N-(5-phospho-beta-D-ribosyl)anthranilate = 1-(2-carboxyphenylamino)-1-deoxy-D-ribulose 5-phosphate. It participates in amino-acid biosynthesis; L-tryptophan biosynthesis; L-tryptophan from chorismate: step 3/5. The protein is N-(5'-phosphoribosyl)anthranilate isomerase of Leptospira interrogans serogroup Icterohaemorrhagiae serovar copenhageni (strain Fiocruz L1-130).